The primary structure comprises 103 residues: uncharacterized protein (103 aa).

This is an uncharacterized protein from Escherichia coli (strain UTI89 / UPEC).